A 1013-amino-acid chain; its full sequence is Hemoglobin-binding protein A (1013 aa).

The first 24 residues, 1 to 24 (MTNFKFSLLACSIAFALNASTAYA), serve as a signal peptide directing secretion. 8 tandem repeats follow at residues 26–29 (QPTN), 30–33 (QPTN), 34–37 (QPTN), 38–41 (QPTN), 42–45 (QPTN), 46–49 (QPTN), 50–53 (QPTN), and 54–57 (QPTN). The tract at residues 26–57 (QPTNQPTNQPTNQPTNQPTNQPTNQPTNQPTN) is 8 X 4 AA tandem repeats of Q-P-T-N. The span at 26–58 (QPTNQPTNQPTNQPTNQPTNQPTNQPTNQPTNQ) shows a compositional bias: low complexity. Residues 26 to 61 (QPTNQPTNQPTNQPTNQPTNQPTNQPTNQPTNQDSN) are disordered. The TonB box signature appears at 67-74 (EQINVSGS). The TBDR plug domain occupies 78-205 (SDSKTPPKIA…LGGSVIYKTK (128 aa)). Residues 213–1013 (NKDYYVSYKK…NYKMSVQFEF (801 aa)) enclose the TBDR beta-barrel domain. A TonB C-terminal box motif is present at residues 996–1013 (NRFYAPGRNYKMSVQFEF).

The protein belongs to the TonB-dependent receptor family. Hemoglobin/haptoglobin binding protein subfamily.

Its subcellular location is the cell outer membrane. Acts as a receptor for hemoglobin of the human host and is required for heme uptake. The sequence is that of Hemoglobin-binding protein A (hgbA) from Haemophilus influenzae.